Here is a 235-residue protein sequence, read N- to C-terminus: Phosphoribosylaminoimidazole-succinocarboxamide synthase (235 aa).

The protein belongs to the SAICAR synthetase family.

The catalysed reaction is 5-amino-1-(5-phospho-D-ribosyl)imidazole-4-carboxylate + L-aspartate + ATP = (2S)-2-[5-amino-1-(5-phospho-beta-D-ribosyl)imidazole-4-carboxamido]succinate + ADP + phosphate + 2 H(+). Its pathway is purine metabolism; IMP biosynthesis via de novo pathway; 5-amino-1-(5-phospho-D-ribosyl)imidazole-4-carboxamide from 5-amino-1-(5-phospho-D-ribosyl)imidazole-4-carboxylate: step 1/2. In Clostridium perfringens (strain SM101 / Type A), this protein is Phosphoribosylaminoimidazole-succinocarboxamide synthase.